Consider the following 171-residue polypeptide: UPF0763 protein HPP12_0677 (171 aa).

This sequence belongs to the UPF0763 family.

The protein is UPF0763 protein HPP12_0677 of Helicobacter pylori (strain P12).